A 172-amino-acid chain; its full sequence is Transcriptional regulator CdrL (172 aa).

The tract at residues 72-113 (SPSAVEEVRTTPASGGRADAEEPGDDGETDAEHADTSATGDE) is disordered. A DZANK-type zinc finger spans residues 116-160 (CSQCGAELSADHVYCPNCGGKATHRVFCECGDEIRADWAFCPRCG).

Belongs to the CdrL family.

Its subcellular location is the cytoplasm. Its function is as follows. Transcriptional regulator involved in the control of cell division. This is Transcriptional regulator CdrL from Halobacterium salinarum (strain ATCC 29341 / DSM 671 / R1).